We begin with the raw amino-acid sequence, 325 residues long: Anthranilate phosphoribosyltransferase (325 aa).

5-phospho-alpha-D-ribose 1-diphosphate is bound by residues glycine 74, 77-78 (GD), threonine 82, 84-87 (NVST), 101-109 (KHGNVSITS), and serine 113. Position 74 (glycine 74) interacts with anthranilate. Position 86 (serine 86) interacts with Mg(2+). Asparagine 104 provides a ligand contact to anthranilate. Arginine 159 contributes to the anthranilate binding site. 2 residues coordinate Mg(2+): aspartate 217 and glutamate 218.

This sequence belongs to the anthranilate phosphoribosyltransferase family. Homodimer. Mg(2+) is required as a cofactor.

The catalysed reaction is N-(5-phospho-beta-D-ribosyl)anthranilate + diphosphate = 5-phospho-alpha-D-ribose 1-diphosphate + anthranilate. The protein operates within amino-acid biosynthesis; L-tryptophan biosynthesis; L-tryptophan from chorismate: step 2/5. In terms of biological role, catalyzes the transfer of the phosphoribosyl group of 5-phosphorylribose-1-pyrophosphate (PRPP) to anthranilate to yield N-(5'-phosphoribosyl)-anthranilate (PRA). The protein is Anthranilate phosphoribosyltransferase of Thermococcus kodakarensis (strain ATCC BAA-918 / JCM 12380 / KOD1) (Pyrococcus kodakaraensis (strain KOD1)).